Here is a 194-residue protein sequence, read N- to C-terminus: Orotate phosphoribosyltransferase (194 aa).

5-phospho-alpha-D-ribose 1-diphosphate contacts are provided by residues Lys98 and 122–130 (EDVLTTGGS). Orotate contacts are provided by Thr126 and Arg154.

Belongs to the purine/pyrimidine phosphoribosyltransferase family. PyrE subfamily. In terms of assembly, homodimer. Mg(2+) serves as cofactor.

It catalyses the reaction orotidine 5'-phosphate + diphosphate = orotate + 5-phospho-alpha-D-ribose 1-diphosphate. The protein operates within pyrimidine metabolism; UMP biosynthesis via de novo pathway; UMP from orotate: step 1/2. Catalyzes the transfer of a ribosyl phosphate group from 5-phosphoribose 1-diphosphate to orotate, leading to the formation of orotidine monophosphate (OMP). This Deinococcus radiodurans (strain ATCC 13939 / DSM 20539 / JCM 16871 / CCUG 27074 / LMG 4051 / NBRC 15346 / NCIMB 9279 / VKM B-1422 / R1) protein is Orotate phosphoribosyltransferase.